Here is a 202-residue protein sequence, read N- to C-terminus: Large ribosomal subunit protein bL9 (202 aa).

Positions 168 to 202 (DEAGFTEDYDPNAEPGEIPTELQDEAPAAEATDEA) are disordered. The span at 192 to 202 (EAPAAEATDEA) shows a compositional bias: low complexity.

It belongs to the bacterial ribosomal protein bL9 family.

Its function is as follows. Binds to the 23S rRNA. The polypeptide is Large ribosomal subunit protein bL9 (Rhizorhabdus wittichii (strain DSM 6014 / CCUG 31198 / JCM 15750 / NBRC 105917 / EY 4224 / RW1) (Sphingomonas wittichii)).